The following is a 148-amino-acid chain: Lysozyme C (148 aa).

Positions M1–G18 are cleaved as a signal peptide. The 130-residue stretch at K19–V148 folds into the C-type lysozyme domain. 4 disulfides stabilise this stretch: C24-C146, C48-C134, C83-C99, and C95-C113. Catalysis depends on residues E53 and D71.

It belongs to the glycosyl hydrolase 22 family. In terms of assembly, monomer.

The catalysed reaction is Hydrolysis of (1-&gt;4)-beta-linkages between N-acetylmuramic acid and N-acetyl-D-glucosamine residues in a peptidoglycan and between N-acetyl-D-glucosamine residues in chitodextrins.. Functionally, lysozymes have primarily a bacteriolytic function; those in tissues and body fluids are associated with the monocyte-macrophage system and enhance the activity of immunoagents. The protein is Lysozyme C (LYZ) of Halichoerus grypus (Gray seal).